The chain runs to 197 residues: Small ribosomal subunit protein uS4c (197 aa).

The S4 RNA-binding domain occupies 85 to 157 (MRLDNILFRL…LQLFTGKELA (73 aa)).

The protein belongs to the universal ribosomal protein uS4 family. Part of the 30S ribosomal subunit. Contacts protein S5. The interaction surface between S4 and S5 is involved in control of translational fidelity.

The protein resides in the plastid. In terms of biological role, one of the primary rRNA binding proteins, it binds directly to 16S rRNA where it nucleates assembly of the body of the 30S subunit. With S5 and S12 plays an important role in translational accuracy. This is Small ribosomal subunit protein uS4c (rps4) from Cuscuta gronovii (Common dodder).